The primary structure comprises 522 residues: MASSRASSTQATKTKAPDDLVAPVVKKPHIYYGSLEEKERERLAKGESGILGKDGLKAGIEAGNINITSGEVFEIEEHISERQAEVLAEFERRKRARQINVSTDDSEVKACLRALGEPITLFGEGPAERRERLRNILSVVGTDALKKTKKDDEKSKKSKEEYQQTWYHEGPNSLKVARLWIANYSLPRAMKRLEEARLHKEIPETTRTSQMQELHKSLRSLNNFCSQIGDDRPISYCHFSPNSKMLATACWSGLCKLWSVPDCNLLHTLRGHNTNVGAIVFHPKSTVSLDPKDVNLASCAADGSVKLWSLDSDEPVADIEGHTVRVARVMWHPSGRFLGTTCYDRSWRLWDLEAQEEILHQEGHSMGVYDIAFHQDGSLAGTGGLDAFGRVWDLRTGRCIMFLEGHLKEIYGINFSPNGYHIATGSGDNTCKVWDLRQRRCVYTIPAHQNLVTGVKFEPIHGNFLLTGAYDNTAKIWTHPGWSPLKTLAGHEGKVMGLDISSDGQLIATCSYDRTFKLWMAE.

The segment covering Met-1–Lys-13 has biased composition (polar residues). A disordered region spans residues Met-1 to Leu-20. Lys-27 bears the N6-acetyllysine mark. WD repeat units follow at residues Gly-229 to Thr-268, Gly-271 to Asp-318, Gly-321 to His-360, Gly-363 to Phe-402, Gly-405 to Thr-444, Ala-447 to Thr-487, and Gly-490 to Ala-521.

As to quaternary structure, component of the precatalytic spliceosome (spliceosome B complex). Component of the U4/U6-U5 tri-snRNP complex, a building block of the precatalytic spliceosome (spliceosome B complex). The U4/U6-U5 tri-snRNP complex is composed of the U4, U6 and U5 snRNAs and at least PRPF3, PRPF4, PRPF6, PRPF8, PRPF31, SNRNP200, TXNL4A, SNRNP40, SNRPB, SNRPD1, SNRPD2, SNRPD3, SNRPE, SNRPF, SNRPG, DDX23, CD2BP2, PPIH, SNU13, EFTUD2, SART1 and USP39, plus LSM2, LSM3, LSM4, LSM5, LSM6, LSM7 and LSM8. Interacts directly with PRPF18, PPIH and PRPF3. Part of a heteromeric complex containing PPIH, PRPF3 and PRPF4 that is stable in the absence of RNA. Interacts with ERCC6.

Its subcellular location is the nucleus. It is found in the nucleus speckle. Its function is as follows. Plays a role in pre-mRNA splicing as component of the U4/U6-U5 tri-snRNP complex that is involved in spliceosome assembly, and as component of the precatalytic spliceosome (spliceosome B complex). The protein is U4/U6 small nuclear ribonucleoprotein Prp4 (PRPF4) of Homo sapiens (Human).